Reading from the N-terminus, the 66-residue chain is Large ribosomal subunit protein bL33c (66 aa).

It belongs to the bacterial ribosomal protein bL33 family.

It is found in the plastid. The chain is Large ribosomal subunit protein bL33c (rpl33) from Epifagus virginiana (Beechdrops).